The sequence spans 533 residues: Calcium-dependent protein kinase 8 (533 aa).

Positions 1–21 are disordered; the sequence is MGNCCASPGSETGSKKGKPKI. Residue glycine 2 is the site of N-myristoyl glycine attachment. The 259-residue stretch at 57 to 315 folds into the Protein kinase domain; that stretch reads YDLGREVGRG…AAQVLEHSWI (259 aa). Residues 63–71 and lysine 86 each bind ATP; that span reads VGRGEFGIT. The active-site Proton acceptor is the aspartate 181. Phosphoserine is present on serine 221. The interval 321–351 is autoinhibitory domain; sequence APNVSLGETVKARLKQFSVMNKLKKRALRVI. EF-hand domains lie at 358–394, 395–430, 431–466, and 467–502; these read EEVAGIKEAFEMMDSKKTGKINLEELKFGLHKLGQQQ, IPDTDLQILMEAADVDGDGTLNYGEFVAVSVHLKKM, ANDEHLHKAFSFFDQNQSDYIEIEELREALNDEVDT, and NSEEVVAAIMQDVDTDKDGRISYEEFAAMMKAGTDW. Positions 371, 375, 377, 382, 408, 410, 412, 414, 419, 444, 446, 448, 450, 455, 480, 482, 484, and 486 each coordinate Ca(2+). Serine 488 carries the post-translational modification Phosphoserine. Glutamate 491 lines the Ca(2+) pocket. Serine 526 is subject to Phosphoserine.

It belongs to the protein kinase superfamily. Ser/Thr protein kinase family. CDPK subfamily.

The protein resides in the cell membrane. The catalysed reaction is L-seryl-[protein] + ATP = O-phospho-L-seryl-[protein] + ADP + H(+). It carries out the reaction L-threonyl-[protein] + ATP = O-phospho-L-threonyl-[protein] + ADP + H(+). With respect to regulation, activated by calcium. Autophosphorylation may play an important role in the regulation of the kinase activity. In terms of biological role, may play a role in signal transduction pathways that involve calcium as a second messenger. This chain is Calcium-dependent protein kinase 8 (CPK8), found in Arabidopsis thaliana (Mouse-ear cress).